Here is a 130-residue protein sequence, read N- to C-terminus: Small ribosomal subunit protein uS11 (130 aa).

Belongs to the universal ribosomal protein uS11 family. In terms of assembly, part of the 30S ribosomal subunit. Interacts with proteins S7 and S18. Binds to IF-3.

Located on the platform of the 30S subunit, it bridges several disparate RNA helices of the 16S rRNA. Forms part of the Shine-Dalgarno cleft in the 70S ribosome. The polypeptide is Small ribosomal subunit protein uS11 (Blochmanniella floridana).